The sequence spans 196 residues: Homeobox protein XENK-2 (196 aa).

Residues 48 to 72 (PSADESPDNDKELSSNPDSGKKRKR) form a disordered region. The segment at residues 69-128 (KRKRRVLFSKAQTYELERRFRQQRYLSAPEREHLASLIRLTPTQVKIWFQNHRYKMKRAR) is a DNA-binding region (homeobox).

It belongs to the NK-2 homeobox family. In terms of tissue distribution, forebrain and midbrain.

Its subcellular location is the nucleus. Functionally, defines dorsal-ventral domains in developing brain. May play a role in defining positional information along the anterior-posterior (a/p) axis and the dorsal-ventral (d/v) axis of the developing nervous system. May be involved in determining positional or boundary information rather than determining a given cell type. The chain is Homeobox protein XENK-2 from Xenopus laevis (African clawed frog).